We begin with the raw amino-acid sequence, 514 residues long: DNA damage-binding protein CMR1 (514 aa).

Positions 26–116 (NLDSLSQSIK…VKQEEKEELS (91 aa)) are disordered. Positions 34 to 44 (IKRELPRASET) are enriched in basic and acidic residues. A compositionally biased stretch (basic residues) spans 45-55 (KKRKTTPRTKA). Basic and acidic residues-rich tracts occupy residues 56 to 65 (VKKEDVEPSR) and 92 to 116 (KFED…EELS). WD repeat units follow at residues 180 to 221 (ISHT…DDSE), 229 to 269 (PHGK…STEV), 280 to 320 (DYAL…KPLK), 327 to 367 (LHDK…KANA), 385 to 423 (SSRL…LIPD), 438 to 481 (GRWV…IAHL), and 483 to 514 (DSVG…YLFE).

Belongs to the WD repeat DDB2/WDR76 family.

In terms of biological role, DNA-binding protein that binds to both single- and double-stranded DNA. Binds preferentially to UV-damaged DNA. May be involved in DNA-metabolic processes. This chain is DNA damage-binding protein CMR1 (PRW1), found in Scheffersomyces stipitis (strain ATCC 58785 / CBS 6054 / NBRC 10063 / NRRL Y-11545) (Yeast).